The following is an 891-amino-acid chain: Alanine--tRNA ligase (891 aa).

Residues His-564, His-568, Cys-677, and His-681 each coordinate Zn(2+).

Belongs to the class-II aminoacyl-tRNA synthetase family. It depends on Zn(2+) as a cofactor.

It localises to the cytoplasm. The catalysed reaction is tRNA(Ala) + L-alanine + ATP = L-alanyl-tRNA(Ala) + AMP + diphosphate. Functionally, catalyzes the attachment of alanine to tRNA(Ala) in a two-step reaction: alanine is first activated by ATP to form Ala-AMP and then transferred to the acceptor end of tRNA(Ala). Also edits incorrectly charged Ser-tRNA(Ala) and Gly-tRNA(Ala) via its editing domain. This chain is Alanine--tRNA ligase, found in Rhodopseudomonas palustris (strain HaA2).